We begin with the raw amino-acid sequence, 326 residues long: Protein spaetzle (326 aa).

An N-terminal signal peptide occupies residues 1 to 25; sequence MMTPMWISLFKVLLLLFAFFATYEA. Asparagine 48 carries N-linked (GlcNAc...) asparagine glycosylation. The disordered stretch occupies residues 56-82; it reads FMPIPTQHDDPTQKQKQNQNQSPIPET. Over residues 69 to 80 the composition is skewed to polar residues; the sequence is KQKQNQNQSPIP. 2 N-linked (GlcNAc...) asparagine glycosylation sites follow: asparagine 114 and asparagine 164. A disordered region spans residues 152-174; the sequence is YRPPQSPARPLRNDTKEHNPCAK. The span at 162–174 shows a compositional bias: basic and acidic residues; the sequence is LRNDTKEHNPCAK. In terms of domain architecture, Spaetzle spans 228 to 322; it reads FLCRSIRKLV…FKIPSCCKCA (95 aa). Cystine bridges form between cysteine 230-cysteine 288, cysteine 267-cysteine 319, and cysteine 274-cysteine 321.

In terms of assembly, homodimer; disulfide-linked. In the presence of Tl, crystal structures show one Tl molecule bound to a spaetzle C-106 homodimer. However, the active complex probably consists of two Tl molecules bound to a spaetzle C-106 homodimer. This is supported by in vitro experiments which also show binding of the spaetzle C-106 dimer to 2 Tl receptors. Ligand binding induces conformational changes in the extracellular domain of Tl. This may enable a secondary homodimerization interface at the C-terminus of the Tl extracellular domain. In terms of processing, during embryonic development proteolytically processed by activated ea/easter; ea cleaves the signal peptide and also generates the C-terminal 12 kDa active ligand for the Toll receptor, C-106 (except for isoform 8.24 and isoform 11.27 as they do not contain the cleavage site). During the immune response, cleaved in the same manner by SPE. Post-translationally, extracellular forms of isoform 8.19 and isoform 11.7 are glycosylated.

Its subcellular location is the secreted. The activated form, spaetzle C-106, acts as a ligand for the Toll receptor. Binding to Toll activates the Toll signaling pathway and induces expression of the antifungal peptide drosomycin. Component of the extracellular signaling pathway that establishes dorsal-ventral polarity in the embryo. The sequence is that of Protein spaetzle from Drosophila melanogaster (Fruit fly).